The following is a 459-amino-acid chain: Glutamyl-tRNA reductase (459 aa).

Residues Thr-49–Arg-52, Ser-109, Glu-114–Gln-116, and Gln-120 each bind substrate. The active-site Nucleophile is Cys-50. Residue Gly-189–Gly-194 participates in NADP(+) binding.

Belongs to the glutamyl-tRNA reductase family. In terms of assembly, homodimer.

It carries out the reaction (S)-4-amino-5-oxopentanoate + tRNA(Glu) + NADP(+) = L-glutamyl-tRNA(Glu) + NADPH + H(+). It participates in porphyrin-containing compound metabolism; protoporphyrin-IX biosynthesis; 5-aminolevulinate from L-glutamyl-tRNA(Glu): step 1/2. Its function is as follows. Catalyzes the NADPH-dependent reduction of glutamyl-tRNA(Glu) to glutamate 1-semialdehyde (GSA). The polypeptide is Glutamyl-tRNA reductase (Mycolicibacterium paratuberculosis (strain ATCC BAA-968 / K-10) (Mycobacterium paratuberculosis)).